The primary structure comprises 417 residues: Putative plant UBX domain-containing protein 14 (417 aa).

Residues 335–415 (DRSVVCSICV…GIANSMISVT (81 aa)) form the UBX domain.

This Arabidopsis thaliana (Mouse-ear cress) protein is Putative plant UBX domain-containing protein 14.